The chain runs to 598 residues: Peroxisomal targeting signal receptor (598 aa).

3 disordered regions span residues 1 to 54, 135 to 154, and 208 to 237; these read MSFM…GEMS, RGGS…MQGG, and AVGK…TTTE. The segment covering 9–22 has biased composition (polar residues); that stretch reads ECSTGRNPLSQFTK. Cys10 participates in a covalent cross-link: Glycyl cysteine thioester (Cys-Gly) (interchain with G-Cter in ubiquitin). Lys22 participates in a covalent cross-link: Glycyl lysine isopeptide (Lys-Gly) (interchain with G-Cter in ubiquitin). Basic and acidic residues predominate over residues 23 to 35; sequence HTAEDRSLQHDRV. Over residues 220-233 the composition is skewed to low complexity; it reads AETATATETVTETE. TPR repeat units lie at residues 304–337, 338–371, 372–409, 410–447, 448–481, 482–515, and 516–549; these read PDPF…NTEH, AEAW…EPGN, LSAL…VVDQ, ARNQ…ANID, ADVQ…RPDD, ALLW…RPSF, and VRAR…HKVE.

Belongs to the peroxisomal targeting signal receptor family. Post-translationally, ubiquitination at Cys-10 is UBC4-independent but requires the presence of PEX4. Ubiquitination at Lys-22 is UBC4-dependent.

It localises to the cytoplasm. The protein resides in the peroxisome membrane. Its function is as follows. Binds to the C-terminal PTS1-type tripeptide peroxisomal targeting signal (SKL-type) and plays an essential role in peroxisomal protein import. The polypeptide is Peroxisomal targeting signal receptor (PAY32) (Yarrowia lipolytica (strain CLIB 122 / E 150) (Yeast)).